Here is a 503-residue protein sequence, read N- to C-terminus: MQDHQHVPIDIQTSKLLDWLVDRRHCNLKWQSLVLTIREKINTAIQDMPESQEIAQLLSGSYIHYFHCLRIVDLLKGTEASTKNIFGRYSSQRMKDWQEIVSLYEKDNTYLVELCSLLVRNVSYEIPSLKKQIAKCQQLQQEYSRKEEEGQAGAAEMREQFYHSCKQYGITGDNVRRELLALVKDLPSQLAEIGAGAQSLGEAIDLYQACVEFVCDSPTEQVLPMLRYVQKKGNSTVYEWRTGTEPSVVERPQLEEPPEQVQEDEIDWGDFGVEAVSDSGIVAETPGIDWGISLESEAKDAGADKIDWGDDAAAASEITVLETGTEAPEGVARGSDALTLLEYPETRNQFIDELMELEIFLSQRAVEMSEEADILSVSQFQLAPAILQGQTKEKMLSLVSTLQQLIGRLTSLRMQHLFMILASPRYVDRVTEFLQQKLKQSQLLALKKELMVEKQQEALQEQAALEPKLDLLLEKTRELQKLIEADISKRYSGRPVNLMGTSL.

3 short sequence motifs (shuffled ATG8-binding motif) span residues 266–269 (IDWG), 288–291 (IDWG), and 306–309 (IDWG). The interval 268–503 (WGDFGVEAVS…RPVNLMGTSL (236 aa)) is required for interaction with UFL1 and mediates interaction with CHEK1. The interval 352 to 367 (DELMELEIFLSQRAVE) is RPL10a-binding domain (RBD). Lys-447 is covalently cross-linked (Glycyl lysine isopeptide (Lys-Gly) (interchain with G-Cter in SUMO2)).

It belongs to the CDK5RAP3 family. Substrate adapter component of the UFM1 ribosome E3 ligase (UREL) complex, composed of UFL1, DDRGK1 and CDK5RAP3. Interaction with UFL1 anchors CDK5RAP3 in the cytoplasm, preventing its translocation to the nucleus which allows expression of the CCND1 cyclin and progression of cells through the G1/S transition. Interacts with ATG8 family proteins MAP1LC3A, MAP1LC3B, GABARAP, GABARAPL1 and GABARAPL2. Interacts with CDK5R1; competes with CDK5RAP1 and CDK5RAP2. Interacts with RELA. Interacts with CHEK1; may negatively regulate CHEK1 and thereby stimulate entry into mitosis. Interacts with CDKN2A/ARF and MDM2; forms a ternary complex involved in regulation of p53/TP53. Interacts with MAPK14. Interacts with CCNB1. Interacts with TUBG1; may regulate CDK5RAP3 in mitotic G2/M transition checkpoint. In terms of processing, may be phosphorylated by CDK5. Ubiquitinated. Probably triggers proteasomal degradation and is negatively regulated by UFL1. Post-translationally, may be ufmylated. In terms of processing, cleaved by caspases early during apoptosis, the resulting peptides may play a role in rupture of the nuclear envelope. As to expression, widely expressed with higher expression in secretory tissues.

The protein resides in the endoplasmic reticulum membrane. It is found in the cytoplasm. It localises to the nucleus. Its subcellular location is the cytoskeleton. The protein localises to the microtubule organizing center. The protein resides in the centrosome. Functionally, substrate adapter of E3 ligase complexes mediating ufmylation, the covalent attachment of the ubiquitin-like modifier UFM1 to substrate proteins, and which is involved in various processes, such as ribosome recycling and reticulophagy (also called ER-phagy). As part of the UREL complex, plays a key role in ribosome recycling by promoting mono-ufmylation of RPL26/uL24 subunit of the 60S ribosome. Ufmylation of RPL26/uL24 occurs on free 60S ribosomes following ribosome dissociation: it weakens the junction between post-termination 60S subunits and SEC61 translocons, promoting release and recycling of the large ribosomal subunit from the endoplasmic reticulum membrane. Ufmylation of RPL26/uL24 and subsequent 60S ribosome recycling either take place after normal termination of translation or after ribosome stalling during cotranslational translocation at the endoplasmic reticulum. Within the UREL complex, CDK5RAP3 acts as a substrate adapter that constrains UFL1 ligase activity to mono-ufmylate RPL26/uL24 at 'Lys-134'. The UREL complex is also involved in reticulophagy in response to endoplasmic reticulum stress by promoting ufmylation of proteins such as CYB5R3, thereby promoting lysosomal degradation of ufmylated proteins. Also acts as a regulator of transcription: negatively regulates NF-kappa-B-mediated gene transcription through the control of RELA phosphorylation. Also regulates mitotic G2/M transition checkpoint and mitotic G2 DNA damage checkpoint. Through its interaction with CDKN2A/ARF and MDM2 may induce MDM2-dependent p53/TP53 ubiquitination, stabilization and activation in the nucleus, thereby promoting G1 cell cycle arrest and inhibition of cell proliferation. May also play a role in the rupture of the nuclear envelope during apoptosis. May regulate MAPK14 activity by regulating its dephosphorylation by PPM1D/WIP1. Required for liver development. The chain is CDK5 regulatory subunit-associated protein 3 from Mus musculus (Mouse).